Here is a 362-residue protein sequence, read N- to C-terminus: tRNA 2-selenouridine synthase (362 aa).

Residues 14 to 137 enclose the Rhodanese domain; it reads LANETPIIDV…LRQATIEMTN (124 aa). Cys-97 serves as the catalytic S-selanylcysteine intermediate.

Belongs to the SelU family. As to quaternary structure, monomer.

It catalyses the reaction 5-methylaminomethyl-2-thiouridine(34) in tRNA + selenophosphate + (2E)-geranyl diphosphate + H2O + H(+) = 5-methylaminomethyl-2-selenouridine(34) in tRNA + (2E)-thiogeraniol + phosphate + diphosphate. The catalysed reaction is 5-methylaminomethyl-2-thiouridine(34) in tRNA + (2E)-geranyl diphosphate = 5-methylaminomethyl-S-(2E)-geranyl-thiouridine(34) in tRNA + diphosphate. The enzyme catalyses 5-methylaminomethyl-S-(2E)-geranyl-thiouridine(34) in tRNA + selenophosphate + H(+) = 5-methylaminomethyl-2-(Se-phospho)selenouridine(34) in tRNA + (2E)-thiogeraniol. It carries out the reaction 5-methylaminomethyl-2-(Se-phospho)selenouridine(34) in tRNA + H2O = 5-methylaminomethyl-2-selenouridine(34) in tRNA + phosphate. Involved in the post-transcriptional modification of the uridine at the wobble position (U34) of tRNA(Lys), tRNA(Glu) and tRNA(Gln). Catalyzes the conversion of 2-thiouridine (S2U-RNA) to 2-selenouridine (Se2U-RNA). Acts in a two-step process involving geranylation of 2-thiouridine (S2U) to S-geranyl-2-thiouridine (geS2U) and subsequent selenation of the latter derivative to 2-selenouridine (Se2U) in the tRNA chain. The polypeptide is tRNA 2-selenouridine synthase (Proteus mirabilis (strain HI4320)).